The primary structure comprises 528 residues: 3-ketoacyl-CoA synthase 2 (528 aa).

2 helical membrane-spanning segments follow: residues Leu36–Leu56 and Phe78–Phe98. The FAE domain maps to Tyr97–Val388. Residues Cys241, His320, His407, His411, and Asn444 contribute to the active site.

Belongs to the thiolase-like superfamily. Chalcone/stilbene synthases family. As to expression, expressed in siliques, flowers and stems. In young seedlings, expressed in the central cylinder of primary roots, in emerging lateral roots and in their root cap, but not in aboveground tissues such as hypocotyls, cotyledons and leaves. Expressed in sepals in mature flowers and in the chalaza and micropyle region of developing seeds shortly prior to or just after the detachment from the funiculus. Expressed in roots, flowers, cauline leaves and siliques.

It is found in the membrane. The enzyme catalyses a very-long-chain acyl-CoA + malonyl-CoA + H(+) = a very-long-chain 3-oxoacyl-CoA + CO2 + CoA. Its pathway is lipid metabolism; fatty acid biosynthesis. With respect to regulation, inhibited by K3 herbicides such as allidochlor, anilofos, cafenstrole and flufenacet. Strongly inhibited by metazachlor. Functionally, mediates the synthesis of VLCFAs from 22 to 26 carbons in length (e.g. C22, C24, C26). Involved in the elongation of C20 fatty acid suberin precursors. Functionally redundant with KCS20 in the two-carbon elongation of C22 fatty acids that is required for cuticular wax and root suberin biosynthesis. The chain is 3-ketoacyl-CoA synthase 2 from Arabidopsis thaliana (Mouse-ear cress).